The primary structure comprises 463 residues: Glutamate--tRNA ligase 2 (463 aa).

The 'HIGH' region motif lies at 10-20 (PSPTGYLHIGG). The 'KMSKS' region signature appears at 238–242 (KLSKR). ATP is bound at residue K241.

It belongs to the class-I aminoacyl-tRNA synthetase family. Glutamate--tRNA ligase type 1 subfamily. Monomer.

It is found in the cytoplasm. The enzyme catalyses tRNA(Glu) + L-glutamate + ATP = L-glutamyl-tRNA(Glu) + AMP + diphosphate. In terms of biological role, catalyzes the attachment of glutamate to tRNA(Glu) in a two-step reaction: glutamate is first activated by ATP to form Glu-AMP and then transferred to the acceptor end of tRNA(Glu). The polypeptide is Glutamate--tRNA ligase 2 (Helicobacter acinonychis (strain Sheeba)).